The primary structure comprises 292 residues: Galactinol synthase 2 (292 aa).

K65 is a catalytic residue. Mn(2+)-binding residues include D81, D83, and H218.

This sequence belongs to the glycosyltransferase 8 family. Galactosyltransferase subfamily. It depends on a divalent metal cation as a cofactor. Present in phloem-associated intermediary cells. Weakly expressed in leaves.

It is found in the cytoplasm. It catalyses the reaction myo-inositol + UDP-alpha-D-galactose = alpha-D-galactosyl-(1-&gt;3)-1D-myo-inositol + UDP + H(+). May promote plant stress tolerance. Galactinol synthase mainly involved in the biosynthesis of transport raffinose family oligosaccharides (RFOs) that function as osmoprotectants. The protein is Galactinol synthase 2 (GOLS2) of Ajuga reptans (Bugle).